Reading from the N-terminus, the 243-residue chain is tRNA (guanine-N(1)-)-methyltransferase (243 aa).

Residues Gly110 and Val130–Met135 contribute to the S-adenosyl-L-methionine site.

Belongs to the RNA methyltransferase TrmD family. As to quaternary structure, homodimer.

It localises to the cytoplasm. It carries out the reaction guanosine(37) in tRNA + S-adenosyl-L-methionine = N(1)-methylguanosine(37) in tRNA + S-adenosyl-L-homocysteine + H(+). Its function is as follows. Specifically methylates guanosine-37 in various tRNAs. This Treponema denticola (strain ATCC 35405 / DSM 14222 / CIP 103919 / JCM 8153 / KCTC 15104) protein is tRNA (guanine-N(1)-)-methyltransferase.